Here is an 879-residue protein sequence, read N- to C-terminus: Beta-mannosidase (879 aa).

Positions 1–17 (MLLRLLLLLAPCGAGFA) are cleaved as a signal peptide. Asn35 and Asn77 each carry an N-linked (GlcNAc...) asparagine glycan. An intrachain disulfide couples Cys167 to Cys176. 190–192 (WDW) serves as a coordination point for substrate. A glycan (N-linked (GlcNAc...) asparagine) is linked at Asn297. Asn456 is a binding site for substrate. Glu457 acts as the Proton donor in catalysis. Disulfide bonds link Cys540–Cys629, Cys732–Cys761, and Cys764–Cys769. Residue Glu554 is the Nucleophile of the active site. Asn803 is a glycosylation site (N-linked (GlcNAc...) asparagine).

It belongs to the glycosyl hydrolase 2 family. As to quaternary structure, monomer. In terms of processing, N-glycosylated. In terms of tissue distribution, detected in kidney (at protein level). Found in spleen and to a lesser extent in liver. Not detected in kidney or brain.

Its subcellular location is the lysosome. It catalyses the reaction Hydrolysis of terminal, non-reducing beta-D-mannose residues in beta-D-mannosides.. Its pathway is glycan metabolism; N-glycan degradation. Functionally, exoglycosidase that cleaves the single beta-linked mannose residue from the non-reducing end of all N-linked glycoprotein oligosaccharides. The protein is Beta-mannosidase (MANBA) of Capra hircus (Goat).